We begin with the raw amino-acid sequence, 269 residues long: 5'-nucleotidase SurE (269 aa).

A divalent metal cation is bound by residues D11, D12, S43, and N101.

It belongs to the SurE nucleotidase family. A divalent metal cation serves as cofactor.

The protein localises to the cytoplasm. The enzyme catalyses a ribonucleoside 5'-phosphate + H2O = a ribonucleoside + phosphate. In terms of biological role, nucleotidase that shows phosphatase activity on nucleoside 5'-monophosphates. The protein is 5'-nucleotidase SurE of Prochlorococcus marinus (strain MIT 9211).